Here is a 374-residue protein sequence, read N- to C-terminus: Fanconi anemia group F protein (374 aa).

In terms of assembly, belongs to the multisubunit FA complex composed of FANCA, FANCB, FANCC, FANCE, FANCF, FANCG, FANCL/PHF9 and FANCM. The complex is not found in FA patients. In complex with FANCA, FANCG and FANCL, but not with FANCC, nor FANCE, interacts with HES1; this interaction may be essential for the stability and nuclear localization of FA core complex proteins.

The protein resides in the nucleus. In terms of biological role, DNA repair protein that may operate in a postreplication repair or a cell cycle checkpoint function. May be implicated in interstrand DNA cross-link repair and in the maintenance of normal chromosome stability. This chain is Fanconi anemia group F protein (FANCF), found in Homo sapiens (Human).